The following is a 227-amino-acid chain: Large ribosomal subunit protein bL25 (227 aa).

The tract at residues 1–22 (MAETKTLAAAARHGTGKGAARS) is disordered.

It belongs to the bacterial ribosomal protein bL25 family. CTC subfamily. As to quaternary structure, part of the 50S ribosomal subunit; part of the 5S rRNA/L5/L18/L25 subcomplex. Contacts the 5S rRNA. Binds to the 5S rRNA independently of L5 and L18.

This is one of the proteins that binds to the 5S RNA in the ribosome where it forms part of the central protuberance. The sequence is that of Large ribosomal subunit protein bL25 from Methylocella silvestris (strain DSM 15510 / CIP 108128 / LMG 27833 / NCIMB 13906 / BL2).